An 894-amino-acid chain; its full sequence is MQKLTAAQIRETFLSFFIRHGHTHVPSSSLVVADDPTLLFANSGMVQFKDVFLGREQRPYSRAVTAQKCLRVSGKHNDLEEVGPSPRHHTFFEMLGNFSFGDYFKAEAIALAWKLLTEEFKLPVERLWFTVFAGDDEVPPDDEAAALWIAQGADPSRVLRFGRKDNFWVMGDTGPCGPCSEITMYIGDDLSQMRAEGVNSDDPNYVEIWNNVFMQYDRATMQPLPRPSVDTGMGLERMAMVMQGVHSTYETDLFVAIINQIIKTRGSDEEHYHAHRSAYRAIADHARAIAFLIADGVLPGNLGRSYVLRRILRRAAYQGRTIGFERPFLADVITSVIEQMGEAYPELVKRRELILSAADQEERQFLRTLSGGLTRLQGVIEQVRARGEQVIPGNDAFVLKDTYGFPLDLTQKIAAEQGLTVDEAGYEAAMAEQRARSRAAAASKRGGEADLWADLDLPASHFTGYERLSDRATVIGMLGDGDALTSADTGRSVQIVLDTTPFYAESGGQIGDTGLLVGPEGSVQIEDTRRPLPGLIVHYGRVVNGRISVGDQVQATVDVVRRADIQRNHTATHMLQRALRDVLGEHAAQAGSLVAPDRLRFDFTHTKAVDPEELREVEQRLNKWVRADTTVRWEITGYQDAMARGAIALFGEKYGDTVRLVTIERGQTLAEGEFASRDSLELCGGTHVNHTGEIGFVRIVSEGSIGSGIRRIEALTGRGAEGWVEQQAQTLRELAARINTQPAQLLERIDALLAEHRQRKQELEALRSKLAREQLDLLLGRVQHVAGVPLLAAEVEADSVDRLREMGEYLRDKLGNAVIVLGAQINGKPQLLTIVTPDLVRRGLNAVQLVKPLAALVGGGGGGRPEIAQAGGRHPDKLAAAIGAAVEVLAGQAG.

Zn(2+) is bound by residues H569, H573, C683, and H687.

The protein belongs to the class-II aminoacyl-tRNA synthetase family. Requires Zn(2+) as cofactor.

It localises to the cytoplasm. The catalysed reaction is tRNA(Ala) + L-alanine + ATP = L-alanyl-tRNA(Ala) + AMP + diphosphate. Catalyzes the attachment of alanine to tRNA(Ala) in a two-step reaction: alanine is first activated by ATP to form Ala-AMP and then transferred to the acceptor end of tRNA(Ala). Also edits incorrectly charged Ser-tRNA(Ala) and Gly-tRNA(Ala) via its editing domain. The sequence is that of Alanine--tRNA ligase from Chloroflexus aurantiacus (strain ATCC 29366 / DSM 635 / J-10-fl).